The primary structure comprises 524 residues: GMP synthase [glutamine-hydrolyzing] (524 aa).

The region spanning 9–207 (RILILDFGSQ…VIHICQCIPN (199 aa)) is the Glutamine amidotransferase type-1 domain. Residue Cys-86 is the Nucleophile of the active site. Active-site residues include His-181 and Glu-183. A GMPS ATP-PPase domain is found at 208 to 399 (WTTKHIIEDS…LGLPADLIYR (192 aa)). 235–241 (SGGVDSA) lines the ATP pocket.

As to quaternary structure, homodimer.

It carries out the reaction XMP + L-glutamine + ATP + H2O = GMP + L-glutamate + AMP + diphosphate + 2 H(+). It participates in purine metabolism; GMP biosynthesis; GMP from XMP (L-Gln route): step 1/1. Catalyzes the synthesis of GMP from XMP. This chain is GMP synthase [glutamine-hydrolyzing], found in Coxiella burnetii (strain RSA 493 / Nine Mile phase I).